A 476-amino-acid chain; its full sequence is Glutamate--tRNA ligase 1 (476 aa).

The short motif at 9-19 (PSPTGFLHIGG) is the 'HIGH' region element. A 'KMSKS' region motif is present at residues 238–242 (KLSKR). An ATP-binding site is contributed by K241.

It belongs to the class-I aminoacyl-tRNA synthetase family. Glutamate--tRNA ligase type 1 subfamily. In terms of assembly, monomer.

The protein localises to the cytoplasm. It catalyses the reaction tRNA(Glu) + L-glutamate + ATP = L-glutamyl-tRNA(Glu) + AMP + diphosphate. Catalyzes the attachment of glutamate to tRNA(Glu) in a two-step reaction: glutamate is first activated by ATP to form Glu-AMP and then transferred to the acceptor end of tRNA(Glu). The protein is Glutamate--tRNA ligase 1 of Bartonella bacilliformis (strain ATCC 35685 / KC583 / Herrer 020/F12,63).